Reading from the N-terminus, the 264-residue chain is Vitellin-degrading protease (264 aa).

The signal sequence occupies residues 1–15; sequence MTNSLLICFTILGLA. A propeptide spans 16–27 (activation peptide); that stretch reads ASSPTKPIGDIR. The region spanning 28 to 253 is the Peptidase S1 domain; that stretch reads IVGGEDIVIT…LREWVDENIT (226 aa). A disulfide bond links Cys53 and Cys69. Residues His68 and Asp113 each act as charge relay system in the active site. An intrachain disulfide couples Cys178 to Cys194. Asp203 contributes to the substrate binding site. An intrachain disulfide couples Cys205 to Cys229. Ser209 functions as the Charge relay system in the catalytic mechanism. Asn251 is a glycosylation site (N-linked (GlcNAc...) asparagine).

This sequence belongs to the peptidase S1 family. In terms of processing, cleavage after Arg-27 leads to beta-VTN protease and subsequent cleavage after Arg-89 leads to alpha-VTN.

In terms of biological role, responsible for the degradation of vitellin in eggs at the head pigmentation stage. The protein is Vitellin-degrading protease of Bombyx mori (Silk moth).